The sequence spans 419 residues: MSSIETYMQSVGEQARTASRAMMRATGAAKNQALLAMAEAILAQRAELQAANAKDVAAARANGLEAALLDRLTLSDRSIALMAEGLRQIAALPDPVGSITATSVRPNGMRVAQMRVPLGVIGIIYESRPNVTIDAAALCLKSGNATILRGGSEALHSNVALGRIVQAGLQAAGLPTAAVQVIDTTDRAAVGKLVTMTEHVDVIVPRGGKGLISRLAQEARVPLIKHLDGNCHVYVDAAADLAKAHDIAFNAKTYRYGVCGAMETLLVHADVAQRLLPVLGQALHEHGVELRGCARALQWLPEGKPADDADWATEYLGPVLAVRVVDTIDEAMDHIARWGSGHTDAIVTENLSAAQRFQREVDSSSVYVNLPTCFADGFEYGLGAEIGISTNRLHARGPVGLEGLTTLKWVLNGEGQVRG.

It belongs to the gamma-glutamyl phosphate reductase family.

The protein resides in the cytoplasm. It carries out the reaction L-glutamate 5-semialdehyde + phosphate + NADP(+) = L-glutamyl 5-phosphate + NADPH + H(+). Its pathway is amino-acid biosynthesis; L-proline biosynthesis; L-glutamate 5-semialdehyde from L-glutamate: step 2/2. In terms of biological role, catalyzes the NADPH-dependent reduction of L-glutamate 5-phosphate into L-glutamate 5-semialdehyde and phosphate. The product spontaneously undergoes cyclization to form 1-pyrroline-5-carboxylate. The polypeptide is Gamma-glutamyl phosphate reductase (Bordetella bronchiseptica (strain ATCC BAA-588 / NCTC 13252 / RB50) (Alcaligenes bronchisepticus)).